An 89-amino-acid polypeptide reads, in one-letter code: MAKKSIIARNEKRKKLVEKYAAKREELLKAGDYEALRKLPRDSSATRVKNRCVLTGRGRGVYEKFGLCRQMFRKFALEGKLPGVKKASW.

Belongs to the universal ribosomal protein uS14 family. In terms of assembly, part of the 30S ribosomal subunit. Contacts proteins S3 and S10.

Functionally, binds 16S rRNA, required for the assembly of 30S particles and may also be responsible for determining the conformation of the 16S rRNA at the A site. This is Small ribosomal subunit protein uS14 from Chlorobium limicola (strain DSM 245 / NBRC 103803 / 6330).